A 154-amino-acid chain; its full sequence is Interleukin-2 (154 aa).

Positions 1-20 (MYRMQLLSCIALSLALVTNS) are cleaved as a signal peptide. Thr-23 is a glycosylation site (O-linked (GalNAc...) threonine). An intrachain disulfide couples Cys-78 to Cys-126.

It belongs to the IL-2 family.

The protein resides in the secreted. Functionally, cytokine produced by activated CD4-positive helper T-cells and to a lesser extend activated CD8-positive T-cells and natural killer (NK) cells that plays pivotal roles in the immune response and tolerance. Binds to a receptor complex composed of either the high-affinity trimeric IL-2R (IL2RA/CD25, IL2RB/CD122 and IL2RG/CD132) or the low-affinity dimeric IL-2R (IL2RB and IL2RG). Interaction with the receptor leads to oligomerization and conformation changes in the IL-2R subunits resulting in downstream signaling starting with phosphorylation of JAK1 and JAK3. In turn, JAK1 and JAK3 phosphorylate the receptor to form a docking site leading to the phosphorylation of several substrates including STAT5. This process leads to activation of several pathways including STAT, phosphoinositide-3-kinase/PI3K and mitogen-activated protein kinase/MAPK pathways. Functions as a T-cell growth factor and can increase NK-cell cytolytic activity as well. Promotes strong proliferation of activated B-cells and subsequently immunoglobulin production. Plays a pivotal role in regulating the adaptive immune system by controlling the survival and proliferation of regulatory T-cells, which are required for the maintenance of immune tolerance. Moreover, participates in the differentiation and homeostasis of effector T-cell subsets, including Th1, Th2, Th17 as well as memory CD8-positive T-cells. This Macaca fascicularis (Crab-eating macaque) protein is Interleukin-2 (IL2).